Consider the following 396-residue polypeptide: MSERKLFTSESVSEGHPDKIADQISDAILDAILAEDPDAHVAAETAVYTGSVHVFGEISTTAYVDINRVVRDTIAEIGYTKGEYGFSAESVGVHPSLVEQSPDIAQGVNEALETRQDASQDPLDLIGAGDQGLMFGFAVDETPELMPLPISLSHKLVRRLAELRKSGEIAYLRPDAKSQVTVEYDEDNQPVRVDTVVISTQHDPEVSQEQIRQDVIERVIKEIIPAHYLDDQTNYFINPTGRFVIGGPQGDSGLTGRKIIVDTYGGYSRHGGGAFSGKDATKVDRSASYAARYIAKNIVAAGLAKKAEVQLAYAIGVAHPVSVRIDTFGTSTVAESKLEAAVRHIFDLRPAGIIQMLDLKRPIYKQTAAYGHMGRTDIDLPWEKLDKVEALKTAVL.

His16 provides a ligand contact to ATP. Residue Asp18 participates in Mg(2+) binding. Residue Glu44 participates in K(+) binding. The L-methionine site is built by Glu57 and Gln100. The flexible loop stretch occupies residues 100-110; it reads QSPDIAQGVNE. Residues 175–177, 242–243, Asp251, 257–258, Ala274, and Lys278 contribute to the ATP site; these read DAK, RF, and RK. Residue Asp251 coordinates L-methionine. Residue Lys282 participates in L-methionine binding.

Belongs to the AdoMet synthase family. Homotetramer; dimer of dimers. Mg(2+) is required as a cofactor. It depends on K(+) as a cofactor.

The protein localises to the cytoplasm. The enzyme catalyses L-methionine + ATP + H2O = S-adenosyl-L-methionine + phosphate + diphosphate. It participates in amino-acid biosynthesis; S-adenosyl-L-methionine biosynthesis; S-adenosyl-L-methionine from L-methionine: step 1/1. Its function is as follows. Catalyzes the formation of S-adenosylmethionine (AdoMet) from methionine and ATP. The overall synthetic reaction is composed of two sequential steps, AdoMet formation and the subsequent tripolyphosphate hydrolysis which occurs prior to release of AdoMet from the enzyme. The polypeptide is S-adenosylmethionine synthase (Streptococcus suis (strain 05ZYH33)).